Here is a 218-residue protein sequence, read N- to C-terminus: Claudin-3 (218 aa).

The Cytoplasmic segment spans residues 1-8 (MSMGLEIA). The chain crosses the membrane as a helical span at residues 9–29 (GTSLAVLGWLSTIVCCALPMW). Residues 30–80 (RVTAFIGSSIITAQITWEGLWMNCVVQSTGQMQCKVYDSLLALPQDLQAAR) lie on the Extracellular side of the membrane. Residues 81-101 (ALIVVSILLAAFGLLVALVGA) traverse the membrane as a helical segment. The Cytoplasmic segment spans residues 102 to 115 (QCTNCVQDDTAKAK). The helical transmembrane segment at 116–136 (ITIVAGVLFLLAALLTLVPVS) threads the bilayer. Over 137–159 (WSANTIIRDFYNPLVPDAQKREM) the chain is Extracellular. The chain crosses the membrane as a helical span at residues 160–180 (GAGLYVGWAAAALQLLGGALL). The Cytoplasmic portion of the chain corresponds to 181 to 218 (CCSCPPRDKKYAPTKIVYSAPRSAGPGTSTAYDRKDYV). Position 198 is a phosphotyrosine (Tyr-198). 2 positions are modified to phosphoserine: Ser-199 and Ser-209. An interactions with TJP1, TJP2 and TJP3 region spans residues 217–218 (YV).

It belongs to the claudin family. As to quaternary structure, can form homo- and heteropolymers with other CLDN. Homopolymers interact with CLDN1 and CLDN2 homopolymers. Interacts in cis (within the same plasma membrane) with CLDN19. Directly interacts with TJP1/ZO-1, TJP2/ZO-2 and TJP3/ZO-3.

The protein localises to the cell junction. Its subcellular location is the tight junction. It is found in the cell membrane. In terms of biological role, plays a major role in tight junction-specific obliteration of the intercellular space, through calcium-independent cell-adhesion activity. The chain is Claudin-3 (CLDN3) from Canis lupus familiaris (Dog).